The sequence spans 435 residues: Hexane cyclase xenF (435 aa).

A signal peptide spans 1–23; the sequence is MSPAANMFRTLTLTALVSAVVSA. N-linked (GlcNAc...) asparagine glycans are attached at residues N81 and N156.

Belongs to the Diels-Alderase family.

It participates in mycotoxin biosynthesis. Functionally, hexane cyclase; part of the gene cluster that mediates the biosynthesis of xenoacremones such as xenoacremone A, a compound that shows inhibitory activity toward the PI3K/AKT signaling pathway and which has the ability to induce apoptosis of A549 lung cancer cells. Within the pathway, cooperation of the hybrid PKS-NRPS xenE and the trans-acting enoyl reductase xenG is responsible for the formation of the reduced tyrosine-nonaketide derivative. The alpha/beta hydrolase xenA then accelerates intramolecular nucleophilic attack to give a pyrrolidone derivative. Subsequently, three enzymes, xenF, xenD, and xenC, coordinately participate in the conversion to xenoacremone B. XenF catalyzes sigmatropic rearrangement to form an A-ring, which leads to an unusual intermediate with a hexane ring, which is required for the formation of the tricarbocyclic product. Epoxidation catalyzed by xenD and the formation of the paracyclophane ether catalyzed by xenC initiate a spontaneous intramolecular Diels-Alder (IMDA) reaction to yield xenoacremone B. Spontaneous hydration of xenoacremone B leads to the formation of xenoacremone A, which undergoes subsequent methylation to afford xenoacremone C. The chain is Hexane cyclase xenF from Xenoacremonium sinensis (Endophyte fungus).